The chain runs to 504 residues: Carnosic acid synthase (504 aa).

Residues 4–24 form a helical membrane-spanning segment; that stretch reads FIILSLAFIAAWVVYSRWSEY. Residue C447 coordinates heme.

It belongs to the cytochrome P450 family. Requires heme as cofactor. In terms of tissue distribution, expressed in glandular trichomes of young leaves.

Its subcellular location is the membrane. The enzyme catalyses 11-hydroxyferruginol + 3 reduced [NADPH--hemoprotein reductase] + 3 O2 = carnosate + 3 oxidized [NADPH--hemoprotein reductase] + 4 H2O + 4 H(+). It catalyses the reaction miltiradiene + 2 reduced [NADPH--hemoprotein reductase] + 2 O2 = miltiradien-20-al + 2 oxidized [NADPH--hemoprotein reductase] + 3 H2O + 2 H(+). It carries out the reaction ferruginol + 3 reduced [NADPH--hemoprotein reductase] + 3 O2 = pisiferate + 3 oxidized [NADPH--hemoprotein reductase] + 4 H2O + 4 H(+). It functions in the pathway secondary metabolite biosynthesis; terpenoid biosynthesis. Functionally, monooxygenase involved in the biosynthesis of carnosate, a potent antioxidant labdane-related diterpene natural products. Catalyzes the oxidation of 11-hydroxyferruginol to produce carnosate. Mediates the conversion of miltiradien into miltiradien-20-al. Also involved in the production of pisiferic acid and derivative products from ferruginol. The protein is Carnosic acid synthase of Rosmarinus officinalis (Rosemary).